The sequence spans 271 residues: Tumor necrosis factor receptor superfamily member 4 (271 aa).

The first 19 residues, Met-1–Gly-19, serve as a signal peptide directing secretion. At Val-20–Pro-210 the chain is on the extracellular side. TNFR-Cys repeat units lie at residues Asn-25–His-60 and Pro-61–Cys-102. Disulfide bonds link Cys-26/Cys-37, Cys-38/Cys-51, Cys-41/Cys-59, Cys-62/Cys-76, Cys-79/Cys-94, Cys-82/Cys-102, Cys-104/Cys-122, and Cys-125/Cys-138. The stretch at Gln-103–Val-123 is one TNFR-Cys 3; truncated repeat. Residues Pro-124 to Glu-164 form a TNFR-Cys 4 repeat. An N-linked (GlcNAc...) asparagine glycan is attached at Asn-143. An intrachain disulfide couples Cys-144 to Cys-163. The chain crosses the membrane as a helical span at residues Ala-211–Leu-235. Residues Arg-236 to Ile-271 are Cytoplasmic-facing.

As to quaternary structure, interacts with TRAF2, TRAF3 and TRAF5. In terms of tissue distribution, activated T-cells.

It localises to the membrane. Receptor for TNFSF4/OX40L/GP34. Is a costimulatory molecule implicated in long-term T-cell immunity. This Rattus norvegicus (Rat) protein is Tumor necrosis factor receptor superfamily member 4 (Tnfrsf4).